Reading from the N-terminus, the 171-residue chain is uncharacterized protein (171 aa).

The PfpI endopeptidase domain occupies 3–171; it reads KKVAIILANE…FNREIVKQLQ (169 aa).

This sequence belongs to the peptidase C56 family.

This is an uncharacterized protein from Staphylococcus aureus (strain MRSA252).